The sequence spans 65 residues: Large ribosomal subunit protein bL35 (65 aa).

The span at 1–26 shows a compositional bias: basic residues; that stretch reads MPKIKTHRGAAKRFSKTGTGKIKRSH. Residues 1–41 form a disordered region; sequence MPKIKTHRGAAKRFSKTGTGKIKRSHAFTSHILTSKTRKNK.

Belongs to the bacterial ribosomal protein bL35 family.

This Geotalea daltonii (strain DSM 22248 / JCM 15807 / FRC-32) (Geobacter daltonii) protein is Large ribosomal subunit protein bL35.